The following is a 313-amino-acid chain: 4-diphosphocytidyl-2-C-methyl-D-erythritol kinase (313 aa).

Lys-10 is an active-site residue. An ATP-binding site is contributed by 95 to 105; it reads PVTAGLGGGSS. The active site involves Asp-136. Residues 289-313 form a disordered region; the sequence is HPRVSPWRSPRSASSPSTRRSSRPT. Low complexity predominate over residues 292-307; that stretch reads VSPWRSPRSASSPSTR.

The protein belongs to the GHMP kinase family. IspE subfamily.

The catalysed reaction is 4-CDP-2-C-methyl-D-erythritol + ATP = 4-CDP-2-C-methyl-D-erythritol 2-phosphate + ADP + H(+). The protein operates within isoprenoid biosynthesis; isopentenyl diphosphate biosynthesis via DXP pathway; isopentenyl diphosphate from 1-deoxy-D-xylulose 5-phosphate: step 3/6. Catalyzes the phosphorylation of the position 2 hydroxy group of 4-diphosphocytidyl-2C-methyl-D-erythritol. This Anaeromyxobacter dehalogenans (strain 2CP-C) protein is 4-diphosphocytidyl-2-C-methyl-D-erythritol kinase.